The chain runs to 186 residues: UPF0200 protein PH1008 (186 aa).

7-14 (GMPGSGKG) serves as a coordination point for ATP.

Belongs to the UPF0200 family.

This Pyrococcus horikoshii (strain ATCC 700860 / DSM 12428 / JCM 9974 / NBRC 100139 / OT-3) protein is UPF0200 protein PH1008.